Consider the following 1033-residue polypeptide: SIT4-associating protein SAP190 (1033 aa).

Disordered stretches follow at residues 32–82 (DQDD…TTES), 147–213 (PEII…QVET), and 768–1033 (FGND…KEAF). Positions 158–170 (ILIERDRKDKKED) are enriched in basic and acidic residues. The segment covering 171 to 182 (AEEGGDSEETTN) has biased composition (acidic residues). Over residues 183–195 (DSDHDSGDERSVD) the composition is skewed to basic and acidic residues. Ser774 carries the post-translational modification Phosphoserine. Composition is skewed to acidic residues over residues 784-793 (SEDIIGDTEG) and 825-838 (ENEE…EYSD). 3 positions are modified to phosphoserine: Ser857, Ser862, and Ser892. A compositionally biased stretch (basic and acidic residues) spans 858 to 879 (DDGKSKSAESEFTDKISEHRDG). The span at 909–924 (SRSQPSDPKLQDQNIF) shows a compositional bias: polar residues. A compositionally biased stretch (acidic residues) spans 932 to 944 (GVGDDDDYMDPND). A Phosphothreonine modification is found at Thr990. Ser991 carries the phosphoserine modification. Acidic residues predominate over residues 1000–1018 (ISSDEEDSEDEDEENDMGN).

The protein belongs to the SAPS family. As to quaternary structure, associates with the SIT4 protein phosphatase catalytic subunit in a cell-cycle-dependent manner. In terms of processing, hyperphosphorylated in the absence of SIT4.

Its subcellular location is the cytoplasm. Positive regulator of protein phosphatase SIT4. Involved in the general amino acid control (GAAC) response regulated by TOR. Involved in the dephosphorylation of the elongator complex subunit IKI3. The protein is SIT4-associating protein SAP190 (SAP190) of Saccharomyces cerevisiae (strain ATCC 204508 / S288c) (Baker's yeast).